Reading from the N-terminus, the 598-residue chain is Elongation factor 4 (598 aa).

Residues 4 to 181 (KKIRNFAIIA…AIVNLIPPPQ (178 aa)) form the tr-type G domain. Residues 16 to 21 (DHGKST) and 128 to 131 (NKID) each bind GTP.

The protein belongs to the TRAFAC class translation factor GTPase superfamily. Classic translation factor GTPase family. LepA subfamily.

It is found in the cell membrane. It carries out the reaction GTP + H2O = GDP + phosphate + H(+). Required for accurate and efficient protein synthesis under certain stress conditions. May act as a fidelity factor of the translation reaction, by catalyzing a one-codon backward translocation of tRNAs on improperly translocated ribosomes. Back-translocation proceeds from a post-translocation (POST) complex to a pre-translocation (PRE) complex, thus giving elongation factor G a second chance to translocate the tRNAs correctly. Binds to ribosomes in a GTP-dependent manner. The chain is Elongation factor 4 from Mesomycoplasma hyopneumoniae (strain 232) (Mycoplasma hyopneumoniae).